The primary structure comprises 622 residues: MSLDISNYPLLALASTPEELRQLPQSALKQLSDELRQFLLTSVGISSGHFASGLGTVELTVALHYVYNTPFDRLIWDVGHQAYPHKILTGRRDKMHTIRQKNGLHPFPWREESQYDTFSVGHSSTSISAALGMAVTAEKEALGRKVVAVIGDGAITGGMAFEALNHAGDLHKDMLVVLNDNEMSISENVGALNNHLAKLMSGRLYTTIREGGKKVLKGMPVIKEMAKRTEEHLKGMVVPGTLFEELGFNYIGPIDGHDVNGLVETLSNMRDLKGPQFLHIMTKKGKGYEPAEKDPIGWHAVPKFDPTQFRKPATKPGLPTFSQVFGKWLCDIAAKDEKVLAITPAMREGSGMVEFSQRFPQQYFDAAIAEQHAVTLGAGFACEGYKAVVAIYSSFLQRGYDQLIHDVALQRLPVLFAIDRGGIVGADGATHQGAFDLSYMRCIPNMVIMAPSDENECRQMFYTGYCYNEGPSAVRYPRGSATGAEQIEEMTALPIGKGVMRRQGQKIAILNFGTTLAAALTAAESLNATVADMRFVKPLDEALLLELAASHDVLVTVEENAIMGGAGSGVLEFLASKNRLKPLLQIGIPDEFIKHGGPEEILSELGLDAAGIEGQIRAFIER.

Residues H80 and 121 to 123 (GHS) each bind thiamine diphosphate. D152 is a binding site for Mg(2+). Thiamine diphosphate contacts are provided by residues 153–154 (GA), N181, Y288, and E370. N181 serves as a coordination point for Mg(2+).

The protein belongs to the transketolase family. DXPS subfamily. Homodimer. The cofactor is Mg(2+). Requires thiamine diphosphate as cofactor.

The enzyme catalyses D-glyceraldehyde 3-phosphate + pyruvate + H(+) = 1-deoxy-D-xylulose 5-phosphate + CO2. It participates in metabolic intermediate biosynthesis; 1-deoxy-D-xylulose 5-phosphate biosynthesis; 1-deoxy-D-xylulose 5-phosphate from D-glyceraldehyde 3-phosphate and pyruvate: step 1/1. Functionally, catalyzes the acyloin condensation reaction between C atoms 2 and 3 of pyruvate and glyceraldehyde 3-phosphate to yield 1-deoxy-D-xylulose-5-phosphate (DXP). The sequence is that of 1-deoxy-D-xylulose-5-phosphate synthase from Shewanella amazonensis (strain ATCC BAA-1098 / SB2B).